The chain runs to 187 residues: MDLLNTTFLSIGLAIDAFAVSLSSGFIIKHIKFNKALKIALFFGIFQGVMPLIGWLTGLTFRDALANFDHWIAFILLAAIGGKMIYEACQDEEENKKFNPLDNYTLFALAIATSIDALAAGLGLSVLRVSILLACTLIASITFSLSFIGVFIGHKFGSIFNQKLEILGGITLIGIGTKILVEGLIIH.

The next 6 helical transmembrane spans lie at 8 to 28 (FLSIGLAIDAFAVSLSSGFII), 39 to 59 (IALFFGIFQGVMPLIGWLTGL), 65 to 85 (LANFDHWIAFILLAAIGGKMI), 106 to 126 (LFALAIATSIDALAAGLGLSV), 131 to 151 (ILLACTLIASITFSLSFIGVF), and 166 to 186 (ILGGITLIGIGTKILVEGLII).

The protein belongs to the MntP (TC 9.B.29) family.

It is found in the cell inner membrane. Its function is as follows. Probably functions as a manganese efflux pump. The protein is Putative manganese efflux pump MntP of Rippkaea orientalis (strain PCC 8801 / RF-1) (Cyanothece sp. (strain PCC 8801)).